A 410-amino-acid chain; its full sequence is Pyruvate dehydrogenase complex protein X component, mitochondrial (410 aa).

A mitochondrion-targeting transit peptide spans 1–30 (MLSAISKVSTLKSCTRYLTKCNYHASAKLL). Residues 32-108 (VKTFSMPAMS…DVGEPIAYIA (77 aa)) form the Lipoyl-binding domain. Residue K73 is modified to N6-lipoyllysine. The region spanning 169–210 (TLLPSVSLLLAENNISKQKALKEIAPSGSNGRLLKGDVLAYL) is the Peripheral subunit-binding (PSBD) domain.

Belongs to the 2-oxoacid dehydrogenase family. Eukaryotic pyruvate dehydrogenase (PDH) complexes are organized as a core consisting of the oligomeric dihydrolipoamide acetyl-transferase (E2), around which are arranged multiple copies of pyruvate dehydrogenase (E1), dihydrolipoamide dehydrogenase (E3) and protein X (E3BP) bound by non-covalent bonds.

The protein localises to the mitochondrion matrix. Required for anchoring dihydrolipoamide dehydrogenase (E3) to the dihydrolipoamide transacetylase (E2) core of the pyruvate dehydrogenase complexes of eukaryotes. This specific binding is essential for a functional PDH complex. The protein is Pyruvate dehydrogenase complex protein X component, mitochondrial (PDX1) of Saccharomyces cerevisiae (strain ATCC 204508 / S288c) (Baker's yeast).